A 456-amino-acid chain; its full sequence is Putative F-box/LRR-repeat protein At3g18150 (456 aa).

In terms of domain architecture, F-box spans 30–78 (VDSISSLPDVILQHILSFIPTKLAITTSLLSKRWRHVWCDTPSLSFNDY). LRR repeat units follow at residues 177–202 (TCLLSDESMANILFGCPILESLTLDH), 203–213 (CGGLRVLDLSK), 228–253 (VPELTAMQIVAPHTHCLRLRNSKLPC), 278–303 (KADFLQVTLLKMLEKLHNVEKLTLGG), 333–358 (IFQYVIPGIERVLQNSPDLKKLTLLT), and 396–422 (CLDVESEHVVSFVELMLKNTKALDKMV).

The sequence is that of Putative F-box/LRR-repeat protein At3g18150 from Arabidopsis thaliana (Mouse-ear cress).